The following is a 184-amino-acid chain: Cytosolic Prostaglandin E synthase (184 aa).

The CS domain maps to 7-96; that stretch reads LIPPPVSWAQ…AAGPYWSSLT (90 aa). The interval 115 to 184 is disordered; that stretch reads ESDDEEGDQK…EGDKEKKPAA (70 aa). Residues Ser116, Ser127, Ser135, Ser156, and Ser162 each carry the phosphoserine modification. Over residues 147 to 158 the composition is skewed to acidic residues; sequence FNVDDEEEDSDD. The segment covering 175 to 184 has biased composition (basic and acidic residues); that stretch reads EGDKEKKPAA.

It belongs to the p23/wos2 family.

The protein resides in the cytoplasm. The catalysed reaction is prostaglandin H2 = prostaglandin E2. Cytosolic prostaglandin synthase that catalyzes the oxidoreduction of prostaglandin endoperoxide H2 (PGH2) to prostaglandin E2 (PGE2). Through production of PGE2 may regulate the activity of non-muscle myosin II in an autocrine or paracrine fashion; this may influence border cell and nurse cell stiffness to facilitate border cell migration during oogenesis. This is Cytosolic Prostaglandin E synthase from Drosophila melanogaster (Fruit fly).